We begin with the raw amino-acid sequence, 148 residues long: Deoxyuridine 5'-triphosphate nucleotidohydrolase (148 aa).

Substrate contacts are provided by residues 65–67 (RSG), Asn-78, 82–84 (TID), and Lys-92.

It belongs to the dUTPase family. It depends on Mg(2+) as a cofactor.

The enzyme catalyses dUTP + H2O = dUMP + diphosphate + H(+). It functions in the pathway pyrimidine metabolism; dUMP biosynthesis; dUMP from dCTP (dUTP route): step 2/2. This enzyme is involved in nucleotide metabolism: it produces dUMP, the immediate precursor of thymidine nucleotides and it decreases the intracellular concentration of dUTP so that uracil cannot be incorporated into DNA. This chain is Deoxyuridine 5'-triphosphate nucleotidohydrolase, found in Chlorobium luteolum (strain DSM 273 / BCRC 81028 / 2530) (Pelodictyon luteolum).